We begin with the raw amino-acid sequence, 346 residues long: 4-hydroxy-2-oxohexanoate aldolase (346 aa).

The Pyruvate carboxyltransferase domain maps to 7–259 (VRITDTSLRD…KTGIDFFDIA (253 aa)). A substrate-binding site is contributed by 15–16 (RD). Residue aspartate 16 participates in Mn(2+) binding. Histidine 19 (proton acceptor) is an active-site residue. Substrate is bound by residues serine 169 and histidine 198. Mn(2+)-binding residues include histidine 198 and histidine 200. Tyrosine 289 is a substrate binding site.

It belongs to the 4-hydroxy-2-oxovalerate aldolase family. In terms of assembly, homodimer. Forms a heterotetramer composed of two aldolase (HsaF) and two dehydrogenase (HsaG) subunits. Mn(2+) is required as a cofactor.

The enzyme catalyses (S)-4-hydroxy-2-oxohexanoate = propanal + pyruvate. The catalysed reaction is (S)-4-hydroxy-2-oxopentanoate = acetaldehyde + pyruvate. Its function is as follows. Involved in cholesterol degradation. Catalyzes the retro-aldol cleavage of 4-hydroxy-2-oxohexanoate (HOHA) to pyruvate and propanal. Can also catalyze the cleavage of 4-hydroxy-2-oxopentanoate (HOPA) to pyruvate and acetaldehyde. The aldehydes produced by this reaction are directly channeled to the dehydrogenase HsaG. This Mycobacterium bovis (strain ATCC BAA-935 / AF2122/97) protein is 4-hydroxy-2-oxohexanoate aldolase.